Reading from the N-terminus, the 418-residue chain is Probable basic-leucine zipper transcription factor E (418 aa).

Positions 8–47 (IQQIQQLHMLLQQQQQQQQQQQQQQQQQQQQLQQQNFQLT) form a coiled coil. Composition is skewed to low complexity over residues 51 to 71 (FQIP…NNNN) and 95 to 134 (INTT…NNNT). Disordered regions lie at residues 51 to 75 (FQIP…ETAF), 95 to 149 (INTT…KKQK), 165 to 196 (PTAA…TTNT), and 211 to 252 (KNQE…KNRR). Residues 169-179 (VKKKPPAKKSA) are compositionally biased toward basic residues. Low complexity predominate over residues 180–196 (KNAASQPTSPTLSTTNT). The span at 220 to 239 (DNSEESDSDEEDFENGDNEN) shows a compositional bias: acidic residues. A bZIP domain is found at 246–309 (GDRKNRRLLK…QLMKDKVRYL (64 aa)). Residues 248–268 (RKNRRLLKNREAAQLFRQRQK) are basic motif. The tract at residues 274 to 281 (LESKASSL) is leucine-zipper. Residues 324–362 (SVVNQDNINNLNNNLNGLQNQQNNNNNNNNNNNNNNNNN) adopt a coiled-coil conformation. The tract at residues 336-418 (NNLNGLQNQQ…DSLLFNLPPD (83 aa)) is disordered.

Belongs to the bZIP family.

It is found in the nucleus. Probable transcriptional regulator. The protein is Probable basic-leucine zipper transcription factor E (bzpE) of Dictyostelium discoideum (Social amoeba).